A 263-amino-acid polypeptide reads, in one-letter code: Tryptophan synthase alpha chain (263 aa).

Active-site proton acceptor residues include Glu51 and Asp62.

Belongs to the TrpA family. As to quaternary structure, tetramer of two alpha and two beta chains.

It carries out the reaction (1S,2R)-1-C-(indol-3-yl)glycerol 3-phosphate + L-serine = D-glyceraldehyde 3-phosphate + L-tryptophan + H2O. It functions in the pathway amino-acid biosynthesis; L-tryptophan biosynthesis; L-tryptophan from chorismate: step 5/5. The alpha subunit is responsible for the aldol cleavage of indoleglycerol phosphate to indole and glyceraldehyde 3-phosphate. This Methanosarcina barkeri (strain Fusaro / DSM 804) protein is Tryptophan synthase alpha chain.